The sequence spans 132 residues: Arsenate reductase 1 (132 aa).

Catalysis depends on nucleophile residues Cys-10, Cys-82, and Cys-89. 2 disulfides stabilise this stretch: Cys-10/Cys-82 and Cys-82/Cys-89.

This sequence belongs to the low molecular weight phosphotyrosine protein phosphatase family. Thioredoxin-coupled ArsC subfamily.

The protein resides in the cytoplasm. It catalyses the reaction arsenate + [thioredoxin]-dithiol + H(+) = arsenite + [thioredoxin]-disulfide + H2O. Functionally, catalyzes the reduction of arsenate [As(V)] to arsenite [As(III)]. This chain is Arsenate reductase 1, found in Staphylococcus epidermidis (strain ATCC 35984 / DSM 28319 / BCRC 17069 / CCUG 31568 / BM 3577 / RP62A).